Here is a 298-residue protein sequence, read N- to C-terminus: MSNAREIRSKVQSVKNTQKITGAMELVAASKMRGAIVKMNNVRPYVESANTIIKNVTAASIDYPNPYLFDRDVKRVGYIVISTDRGLCGGLNINLFKHVLKEIKNNIEDRVGVDVCVIGSKAENFFAKLKDVNIVATAHYNDKDKEGSIRAIGGAVKVMLDKFTAGEIDRLYMSSNQFVSTIKQRPRLQTLLPIQDIFSAEEIKANKEKATKGHWDYIYERDIEEVLNALCIRYIEAQVRGAILENAACEQAARMMAMKNATDNASDIIDQLKLDYNKVRQAMITQELAEICSGAAAV.

It belongs to the ATPase gamma chain family. In terms of assembly, F-type ATPases have 2 components, CF(1) - the catalytic core - and CF(0) - the membrane proton channel. CF(1) has five subunits: alpha(3), beta(3), gamma(1), delta(1), epsilon(1). CF(0) has three main subunits: a, b and c.

Its subcellular location is the cell inner membrane. In terms of biological role, produces ATP from ADP in the presence of a proton gradient across the membrane. The gamma chain is believed to be important in regulating ATPase activity and the flow of protons through the CF(0) complex. This chain is ATP synthase gamma chain, found in Francisella tularensis subsp. mediasiatica (strain FSC147).